A 338-amino-acid chain; its full sequence is 26S proteasome regulatory subunit RPN8 (338 aa).

Serine 2 bears the N-acetylserine mark. The region spanning 8 to 143 is the MPN domain; the sequence is VTIAPLVLLS…TDAYVAIEQV (136 aa). Residues 301 to 326 show a composition bias toward basic and acidic residues; sequence IQEQRVKDKQSKVSDDSESESGDKEA. The tract at residues 301-338 is disordered; the sequence is IQEQRVKDKQSKVSDDSESESGDKEATAPLIQRKNKKN. Phosphoserine is present on residues serine 314, serine 317, and serine 319. Threonine 327 carries the post-translational modification Phosphothreonine.

It belongs to the peptidase M67A family. In terms of processing, N-acetylated by NAT1.

Its function is as follows. Acts as a regulatory subunit of the 26S proteasome which is involved in the ATP-dependent degradation of ubiquitinated proteins. The sequence is that of 26S proteasome regulatory subunit RPN8 (RPN8) from Saccharomyces cerevisiae (strain ATCC 204508 / S288c) (Baker's yeast).